A 535-amino-acid polypeptide reads, in one-letter code: Pre-mRNA-splicing factor SLU7-A (535 aa).

Residues Glu21–Ile44 are disordered. The CCHC-type zinc finger occupies Cys96 to Cys109. The span at Leu176–Asp190 shows a compositional bias: basic and acidic residues. Disordered regions lie at residues Leu176–Val204 and Glu489–Tyr508. The span at Ala191–Arg203 shows a compositional bias: acidic residues. The residue at position 193 (Ser193) is a Phosphoserine. The short motif at Leu486–Arg493 is the Nuclear localization signal element. Basic and acidic residues predominate over residues Glu489 to Lys501.

The protein belongs to the SLU7 family. In terms of tissue distribution, mainly expressed in tissues undergoing cell proliferation, particularly in lateral organs.

It localises to the nucleus. In terms of biological role, participates in the second catalytic step of pre-mRNA splicing, when the free hydroxyl group of exon I attacks the 3'-splice site to generate spliced mRNA and the excised lariat intron. Together with SMP2, involved in the timing of cell cycle arrest during leaf development, in a STRUWWELPETER (SWP) dependent manner; promotes cell proliferation in developing organs. This chain is Pre-mRNA-splicing factor SLU7-A, found in Arabidopsis thaliana (Mouse-ear cress).